A 775-amino-acid chain; its full sequence is Coiled-coil domain-containing protein 33 (775 aa).

Disordered stretches follow at residues 1 to 23 (MGRQ…LDPY) and 68 to 87 (EANN…PTRA). Basic and acidic residues predominate over residues 7 to 18 (KVPEEPQDRLDT). In terms of domain architecture, C2 spans 12–141 (PQDRLDTSLD…RAFHPYHFEL (130 aa)). A compositionally biased stretch (polar residues) spans 71 to 84 (NHSPQARTSVTSEP). 2 coiled-coil regions span residues 414-561 (VEMN…ERKE) and 672-715 (DKFS…LQEQ). The segment at 735-775 (RSQGSTTPRQNLKDEGYPGNIERPLQTHLTPGTRDIRHHLR) is disordered.

The protein is Coiled-coil domain-containing protein 33 (Ccdc33) of Rattus norvegicus (Rat).